Here is a 312-residue protein sequence, read N- to C-terminus: MNILTDPNKLKTSGCADVNASKCAEGDGEGSVQVQLDPNLNIGTAKVFSIYGKGGIGKSTTSSNLSVAFSKLGKRVLQIGCDPKHDSTFTLTKKLMPTVIDVLESVNFHSEEVRPEDFVFEGYNGVMCVEAGGPPAGTGCGGYVVGQTVKLLKEHHLLEDTDVVIFDVLGDVVCGGFASPLQHSERAMIVAANDFDSIFAANRIAAAIQAKSKNYAVRLAGVIANRSRETDQIDKFGERTGIKRVAHLPDLDVIRKSRLKKMTLFEMDHTPEIEAVQNEYLRLATELWEAKEPPVQGKPLKDRDIFDLLGFD.

Residues 55–60 and Lys-84 contribute to the ATP site; that span reads GIGKST. Residue Ser-59 participates in Mg(2+) binding. Residues Cys-140 and Cys-174 each contribute to the [4Fe-4S] cluster site. Residues 225 to 226 and 249 to 251 contribute to the ATP site; these read NR and PDL.

Belongs to the NifH/BchL/ChlL family. Homodimer. Protochlorophyllide reductase is composed of three subunits; BchL, BchN and BchB. [4Fe-4S] cluster serves as cofactor.

It catalyses the reaction chlorophyllide a + oxidized 2[4Fe-4S]-[ferredoxin] + 2 ADP + 2 phosphate = protochlorophyllide a + reduced 2[4Fe-4S]-[ferredoxin] + 2 ATP + 2 H2O. Its pathway is porphyrin-containing compound metabolism; bacteriochlorophyll biosynthesis (light-independent). In terms of biological role, component of the dark-operative protochlorophyllide reductase (DPOR) that uses Mg-ATP and reduced ferredoxin to reduce ring D of protochlorophyllide (Pchlide) to form chlorophyllide a (Chlide). This reaction is light-independent. The L component serves as a unique electron donor to the NB-component of the complex, and binds Mg-ATP. The protein is Light-independent protochlorophyllide reductase iron-sulfur ATP-binding protein of Rhodopseudomonas palustris (strain ATCC BAA-98 / CGA009).